Reading from the N-terminus, the 329-residue chain is Ribosomal protein L11 methyltransferase (329 aa).

The S-adenosyl-L-methionine site is built by Thr177, Gly198, Asp220, and Asn264.

This sequence belongs to the methyltransferase superfamily. PrmA family.

The protein resides in the cytoplasm. The enzyme catalyses L-lysyl-[protein] + 3 S-adenosyl-L-methionine = N(6),N(6),N(6)-trimethyl-L-lysyl-[protein] + 3 S-adenosyl-L-homocysteine + 3 H(+). In terms of biological role, methylates ribosomal protein L11. This is Ribosomal protein L11 methyltransferase from Helicobacter pylori (strain J99 / ATCC 700824) (Campylobacter pylori J99).